We begin with the raw amino-acid sequence, 330 residues long: Tyrosine-protein phosphatase yvh1 (330 aa).

Positions 45–187 (NDLSEISKNL…LRVYFECNYQ (143 aa)) constitute a Tyrosine-protein phosphatase domain. C131 serves as the catalytic Phosphocysteine intermediate.

The protein belongs to the protein-tyrosine phosphatase family. Non-receptor class dual specificity subfamily.

The protein resides in the cytoplasm. It is found in the nucleus. It catalyses the reaction O-phospho-L-tyrosyl-[protein] + H2O = L-tyrosyl-[protein] + phosphate. Its function is as follows. May be directly involved in signal transduction and/or cell cycle regulation. It is necessary for maintaining growth rate or spore germination. Could show both activity toward tyrosine-protein phosphate as well as with serine-protein phosphate. This Schizosaccharomyces pombe (strain 972 / ATCC 24843) (Fission yeast) protein is Tyrosine-protein phosphatase yvh1 (yvh1).